The chain runs to 259 residues: Eukaryotic translation initiation factor 4E1 (259 aa).

Residues Met1–Asp70 form a disordered region. Residues Phe18–Gln27 show a composition bias toward polar residues. Positions Glu41–Pro51 are enriched in basic and acidic residues. The segment covering Thr54–Asp70 has biased composition (low complexity). MRNA contacts are provided by residues Trp100 to Glu101, Trp146 to Glu147, and Arg199 to Lys204.

It belongs to the eukaryotic initiation factor 4E family. As to quaternary structure, eIF4F is a multi-subunit complex, the composition of which varies with external and internal environmental conditions. It is composed of at least eIF4A, eIF4E1 and eIF4G1. Recruited by cup in oocytes and in early embryos, preventing the interaction with eIF4G. The interaction with cup therefore prevents the translation of key transcripts such as oskar (osk) and nanos (nos) in some regions in the early embryo. Interacts with mxt. Interacts with 4E-T and Thor. Forms a RNP containing at least me31B, eIF4E1, cup, tral and pAbp; this interaction is required for the translational silencing of maternal mRNAs during the maternal-to-zygotic transition. In terms of processing, phosphorylation increases the ability of the protein to bind to mRNA caps and to form the eIF4F complex. Expressed at the posterior end of developing oocytes (at protein level). Preferential expression in the pole cells, at different developmental stages.

It localises to the cytoplasm. Its subcellular location is the cytoplasmic ribonucleoprotein granule. It is found in the nucleus. The protein resides in the nuclear body. Recognizes and binds the 7-methylguanosine (m7G)-containing mRNA cap during an early step in the initiation of protein synthesis and facilitates ribosome binding by inducing the unwinding of the mRNAs secondary structures. In 0-1 hour embryos, forms a complex with me31B, cup, tral and pAbp which binds to various mRNAs including maternal mRNAs, and down-regulates their expression during the maternal-to-zygotic transition. The sequence is that of Eukaryotic translation initiation factor 4E1 from Drosophila melanogaster (Fruit fly).